Here is a 247-residue protein sequence, read N- to C-terminus: 5'-nucleotidase SurE (247 aa).

Positions 8, 9, 39, and 91 each coordinate a divalent metal cation.

Belongs to the SurE nucleotidase family. It depends on a divalent metal cation as a cofactor.

Its subcellular location is the cytoplasm. The enzyme catalyses a ribonucleoside 5'-phosphate + H2O = a ribonucleoside + phosphate. Nucleotidase that shows phosphatase activity on nucleoside 5'-monophosphates. The chain is 5'-nucleotidase SurE from Ruthia magnifica subsp. Calyptogena magnifica.